The chain runs to 182 residues: Peptidyl-tRNA hydrolase (182 aa).

Tyr14 lines the tRNA pocket. The Proton acceptor role is filled by His19. TRNA-binding residues include Tyr65, Asn67, and Asn113.

The protein belongs to the PTH family. As to quaternary structure, monomer.

Its subcellular location is the cytoplasm. The catalysed reaction is an N-acyl-L-alpha-aminoacyl-tRNA + H2O = an N-acyl-L-amino acid + a tRNA + H(+). Its function is as follows. Hydrolyzes ribosome-free peptidyl-tRNAs (with 1 or more amino acids incorporated), which drop off the ribosome during protein synthesis, or as a result of ribosome stalling. Catalyzes the release of premature peptidyl moieties from peptidyl-tRNA molecules trapped in stalled 50S ribosomal subunits, and thus maintains levels of free tRNAs and 50S ribosomes. This chain is Peptidyl-tRNA hydrolase, found in Rickettsia peacockii (strain Rustic).